Consider the following 110-residue polypeptide: Flagellar hook-basal body complex protein FliE (110 aa).

Belongs to the FliE family.

The protein resides in the bacterial flagellum basal body. The polypeptide is Flagellar hook-basal body complex protein FliE (Bordetella petrii (strain ATCC BAA-461 / DSM 12804 / CCUG 43448)).